The chain runs to 293 residues: Ribosomal protein L11 methyltransferase (293 aa).

Residues threonine 145, glycine 166, aspartate 188, and asparagine 230 each contribute to the S-adenosyl-L-methionine site.

The protein belongs to the methyltransferase superfamily. PrmA family.

It is found in the cytoplasm. The enzyme catalyses L-lysyl-[protein] + 3 S-adenosyl-L-methionine = N(6),N(6),N(6)-trimethyl-L-lysyl-[protein] + 3 S-adenosyl-L-homocysteine + 3 H(+). Its function is as follows. Methylates ribosomal protein L11. This is Ribosomal protein L11 methyltransferase from Sodalis glossinidius (strain morsitans).